The chain runs to 229 residues: Clathrin light chain B (229 aa).

The span at 1 to 17 shows a compositional bias: low complexity; that stretch reads MADDFGFFSSSESGAPE. The segment at 1–82 is disordered; it reads MADDFGFFSS…NGDVFQEANG (82 aa). 2 positions are modified to phosphoserine: Ser-11 and Ser-13. Residues 58 to 73 are compositionally biased toward polar residues; sequence GPTSGAGSEDMGTTVN. The segment at 93–155 is involved in binding clathrin heavy chain; it reads ADRLTQEPES…QVEKNKINNR (63 aa). The residue at position 187 (Thr-187) is a Phosphothreonine. Cys-199 and Cys-209 form a disulfide bridge. At Lys-204 the chain carries N6-acetyllysine. Ser-217 carries the post-translational modification Phosphoserine.

It belongs to the clathrin light chain family. As to quaternary structure, clathrin coats are formed from molecules containing 3 heavy chains and 3 light chains. Interacts (via N-terminus) with HIP1. Interacts with HIP1R.

Its subcellular location is the cytoplasmic vesicle membrane. It localises to the membrane. The protein localises to the coated pit. Its function is as follows. Clathrin is the major protein of the polyhedral coat of coated pits and vesicles. The sequence is that of Clathrin light chain B (CLTB) from Homo sapiens (Human).